The following is a 365-amino-acid chain: DNA replication and repair protein RecF (365 aa).

30 to 37 contacts ATP; sequence GLNAQGKT.

This sequence belongs to the RecF family.

It localises to the cytoplasm. Its function is as follows. The RecF protein is involved in DNA metabolism; it is required for DNA replication and normal SOS inducibility. RecF binds preferentially to single-stranded, linear DNA. It also seems to bind ATP. The sequence is that of DNA replication and repair protein RecF from Chlamydia trachomatis serovar A (strain ATCC VR-571B / DSM 19440 / HAR-13).